Reading from the N-terminus, the 653-residue chain is Acetyl-coenzyme A synthetase (653 aa).

Residues 196–199 (RGGK) and Thr315 each bind CoA. Residues 391 to 393 (GEP), 415 to 420 (DTWWQT), Asp506, and Arg521 each bind ATP. Ser529 serves as a coordination point for CoA. ATP is bound at residue Arg532. Val543 and Val548 together coordinate Mg(2+). An N6-acetyllysine modification is found at Lys618.

This sequence belongs to the ATP-dependent AMP-binding enzyme family. Mg(2+) serves as cofactor. Acetylated. Deacetylation by the SIR2-homolog deacetylase activates the enzyme.

The catalysed reaction is acetate + ATP + CoA = acetyl-CoA + AMP + diphosphate. In terms of biological role, catalyzes the conversion of acetate into acetyl-CoA (AcCoA), an essential intermediate at the junction of anabolic and catabolic pathways. AcsA undergoes a two-step reaction. In the first half reaction, AcsA combines acetate with ATP to form acetyl-adenylate (AcAMP) intermediate. In the second half reaction, it can then transfer the acetyl group from AcAMP to the sulfhydryl group of CoA, forming the product AcCoA. The polypeptide is Acetyl-coenzyme A synthetase (Laribacter hongkongensis (strain HLHK9)).